Reading from the N-terminus, the 317-residue chain is tRNA(Ile)-lysidine synthase (317 aa).

30–35 (SGGSDS) is a binding site for ATP.

Belongs to the tRNA(Ile)-lysidine synthase family.

The protein localises to the cytoplasm. It catalyses the reaction cytidine(34) in tRNA(Ile2) + L-lysine + ATP = lysidine(34) in tRNA(Ile2) + AMP + diphosphate + H(+). In terms of biological role, ligates lysine onto the cytidine present at position 34 of the AUA codon-specific tRNA(Ile) that contains the anticodon CAU, in an ATP-dependent manner. Cytidine is converted to lysidine, thus changing the amino acid specificity of the tRNA from methionine to isoleucine. The polypeptide is tRNA(Ile)-lysidine synthase (Chlamydia caviae (strain ATCC VR-813 / DSM 19441 / 03DC25 / GPIC) (Chlamydophila caviae)).